Reading from the N-terminus, the 206-residue chain is RILP-like protein 2 (206 aa).

Residues 1–29 (MEEPPLREEEEEEEEDEAGPEGALGKSPL) form a disordered region. The segment covering 8–19 (EEEEEEEEDEAG) has biased composition (acidic residues). Residues 19-108 (GPEGALGKSP…RREGSAAGPE (90 aa)) enclose the RH1 domain. The stretch at 67–159 (LEMLETLVNE…VQEELQCYKS (93 aa)) forms a coiled coil. One can recognise an RH2 domain in the interval 125–197 (RPRFTLQELR…KEEKTIIRKL (73 aa)). The interval 161-189 (LIPPREGPGGRREKEALFPRGSNANSNKE) is disordered. Positions 168–177 (PGGRREKEAL) are enriched in basic and acidic residues.

The protein belongs to the RILPL family. In terms of assembly, homodimer. Interacts with RAC1. Interacts (via N-terminus) with MYO5A, the interaction is required for its role in dendrite formation. Interacts with RAB8A; interaction is dependent on the phosphorylation of RAB8A on 'Thr-72'. Interacts with RAB10 and RAB12; interaction is dependent on the phosphorylation of 'Thr-73' on RAB10 and 'Ser-105' on RAB12.

The protein resides in the cytoplasm. The protein localises to the cytosol. Its subcellular location is the cytoskeleton. It localises to the microtubule organizing center. It is found in the centrosome. The protein resides in the cell projection. The protein localises to the cilium. Involved in cell shape and neuronal morphogenesis, positively regulating the establishment and maintenance of dendritic spines. Plays a role in cellular protein transport, including protein transport away from primary cilia. May function via activation of RAC1 and PAK1. In Bos taurus (Bovine), this protein is RILP-like protein 2 (RILPL2).